The sequence spans 765 residues: MNFEDIEDQDGIRLSWNTFSATPAENARAVIPIAAMYTPLHENERMTIEQYDPVACRAPCRAVLNPYCHVDLRARFWICPFCFQRNPLPAQYSDISSNSLPLELLSQSTTMEYVLSKPVKSPPVFLFVMDTAVDESELTALKDAVIVSLSLLPPDAIVGLITYGSLIQVHEIGFEAMPKSYVFQPAADYSTMKLQQLLALSGNQIRSSSSKAKISGTGITLNLGAASRFLMPVQKCEMHLLNILEQLQPDCLEVPAGQRQLRCTGAAVKIASDLLGIAFPKCGSRIELFCGGPCTVGLGQVVSTELKEPMRSHSEIANDKAKHFKKSKKFYSSLAERLSNQGHALDLFAGCLDQVGIMEMENLVNNTGGAIVLSDSFTTSIFKQSFQRLFSVDASGYLKMGFMANLEVLTSKGLTICGMIGNGVGENKKGTNISDTQIGISKTNSWKMAAISPKSSYALYFDLGKEMGNPNSQRPTQAFIQFLTYYQHSSGTYRLRVTTISRSFITGNAKSISESFDQEAAAAIVARMALFKCQTEDEMSVTRWIDRNLIRLCQHFADYRKEDPSSFRLLPNFTLYPQFIFHLRRSPFLHIFNNSPDETSFYRHMLNVADVNDSLIMIQPTLQSYSFNEPEGVPVLLDSVSIKPDVILLLDTYFHILIFHGSTIAQWRNAGYQEQPEYVNLKELLLAPRLEVTELLADRFPIPRFIVCDQGGSQARFLLSRINPSVSFNKSSQFSPMSKDSETVLTDDVNLQKFMDHLRKMAVIS.

4 residues coordinate Zn(2+): Cys56, Cys60, Cys79, and Cys82. 2 positions are modified to phosphoserine: Ser565 and Ser566.

This sequence belongs to the SEC23/SEC24 family. SEC23 subfamily. In terms of assembly, the COPII coat is composed of at least 5 proteins: the sec23/24 complex, the sec13/31 complex, and the protein sar1.

The protein resides in the cytoplasm. Its subcellular location is the cytoplasmic vesicle. It localises to the COPII-coated vesicle membrane. The protein localises to the endoplasmic reticulum membrane. It is found in the golgi apparatus membrane. Its function is as follows. Component of the coat protein complex II (COPII) which promotes the formation of transport vesicles from the endoplasmic reticulum (ER). The coat has two main functions, the physical deformation of the endoplasmic reticulum membrane into vesicles and the selection of cargo molecules. The protein is Protein transport protein sec23-2 (sec232) of Schizosaccharomyces pombe (strain 972 / ATCC 24843) (Fission yeast).